The sequence spans 253 residues: Small ribosomal subunit protein uS3 (253 aa).

The KH type-2 domain occupies isoleucine 39–isoleucine 109. The tract at residues aspartate 220–serine 253 is disordered. Basic and acidic residues predominate over residues glutamate 221–asparagine 242. Residues arginine 243–serine 253 are compositionally biased toward basic residues.

Belongs to the universal ribosomal protein uS3 family. In terms of assembly, part of the 30S ribosomal subunit. Forms a tight complex with proteins S10 and S14.

Functionally, binds the lower part of the 30S subunit head. Binds mRNA in the 70S ribosome, positioning it for translation. The sequence is that of Small ribosomal subunit protein uS3 from Chlorobium chlorochromatii (strain CaD3).